We begin with the raw amino-acid sequence, 469 residues long: Transcription factor E2FB (469 aa).

2 disordered regions span residues 1–28 (MSEE…PPLV) and 84–118 (QTPV…AGSP). Polar residues-rich tracts occupy residues 8 to 22 (QFPS…SLSS) and 100 to 118 (SAKS…AGSP). A DNA-binding region spans residues 129–194 (RYDSSLGLLT…TLKNRIQWKG (66 aa)). Residues 202-246 (ETIESIANLQDEVQNLAAEEARLDDQIRESQERLTSLSEDENNKR) adopt a coiled-coil conformation. The segment at 210–238 (LQDEVQNLAAEEARLDDQIRESQERLTSL) is leucine-zipper. Residues 319–374 (PQADEPSNVPDEPSNVPDVPSNLPSTSGLPENHDVSMPMKEESTERNMETQEVDDT) are disordered. Residues 349-374 (ENHDVSMPMKEESTERNMETQEVDDT) show a composition bias toward basic and acidic residues. The tract at residues 403–419 (DYWFRSEVGEVSITDMW) is retinoblastoma protein binding. The interval 426 to 469 (DWNQMITFDQDHAGPSDNKILEQPQTPSSPTPEESTATRSPTGS) is disordered. A compositionally biased stretch (low complexity) spans 447–469 (EQPQTPSSPTPEESTATRSPTGS).

Belongs to the E2F/DP family. As to quaternary structure, heterodimer with DP proteins. Interacts (via dimerization domain) preferentially with DPA, but also with DPB. Interacts with PURA1 and retinoblastoma-related protein RBR1. Component of a DREAM-like complex which modulates a variety of developmentally regulated genes and of the mitotic genes in proliferating and differentiated cells. Interacts with MYB3R4 only at early stages of leaves development. Post-translationally, phosphorylated. In terms of tissue distribution, expressed in proliferating cells and several differentiated tissues. Detected in inflorescence and shoot apical meristems, cotyledonary vascular tissues, leaf primordia, young leaves, base of trichomes, central cylinder and elongation zone of roots, lateral root primordia, flowers, pistils of immature flowers and pollen grains.

The protein resides in the cytoplasm. The protein localises to the nucleus. Functionally, transcription activator that binds DNA cooperatively with DP proteins through the E2 recognition site, 5'-TTTC[CG]CGC-3' found in the promoter region of a number of genes whose products are involved in cell cycle regulation or in DNA replication. The binding of retinoblastoma-related proteins represses transactivation. Involved in the control of cell-cycle progression from G1 to S phase and from G2 to M phase. Stimulates cell proliferation and delays differentiation. Represses cell enlargement and endoreduplication in auxin-free conditions. The sequence is that of Transcription factor E2FB (E2FB) from Arabidopsis thaliana (Mouse-ear cress).